Reading from the N-terminus, the 151-residue chain is uncharacterized protein (151 aa).

This is an uncharacterized protein from Homo sapiens (Human).